Consider the following 277-residue polypeptide: uncharacterized protein (277 aa).

2 disordered regions span residues 33–168 and 210–277; these read KNDN…VTTR and NKLL…PIEF. Basic and acidic residues predominate over residues 34–45; sequence NDNDERTAHEES. Basic residues predominate over residues 86-99; sequence LKSKSKRKTKKGGS. Composition is skewed to basic and acidic residues over residues 100–113, 151–168, and 216–230; these read KPRE…KHIV, AKEL…VTTR, and TNED…NKEK. Positions 231 to 241 are enriched in basic residues; it reads DRKRRERRTAR. A compositionally biased stretch (basic and acidic residues) spans 242-258; that stretch reads RKDERKQEKKQEKKQDN. A compositionally biased stretch (polar residues) spans 259–271; that stretch reads KTSQSFPSSTDMN.

The protein localises to the cytoplasm. This is an uncharacterized protein from Saccharomyces cerevisiae (strain ATCC 204508 / S288c) (Baker's yeast).